Here is a 259-residue protein sequence, read N- to C-terminus: 14-3-3-like protein (259 aa).

Residues 237–259 (DTTDDAEDEIREGSKQESGDGQQ) form a disordered region. Residues 247-259 (REGSKQESGDGQQ) are compositionally biased toward basic and acidic residues.

It belongs to the 14-3-3 family. Leaves specific.

This Solanum tuberosum (Potato) protein is 14-3-3-like protein.